The sequence spans 621 residues: uncharacterized protein (621 aa).

A phosphoserine mark is found at Ser269, Ser271, Ser274, Ser290, and Ser292. LRR repeat units lie at residues 333-354, 357-379, 380-401, 404-425, 426-447, and 451-472; these read QLLYLRCSSCKLKSIPKNVFLS, SLVSLDLSGNELTEIPYALGELP, QLCSLNLASNKITGCRTFYHIS, HLQILVLSRNHLTSLSGLENVP, SLEKLDIRDNSITDVVEFRRLV, and NFEEAYLSLNPFTKTYSSYRIT. Positions 552-581 are disordered; that stretch reads SKNASGGDTSSNVSLLNGSASEEIPQNTES.

Its subcellular location is the cytoplasm. The protein localises to the nucleus. It is found in the vacuole membrane. This is an uncharacterized protein from Schizosaccharomyces pombe (strain 972 / ATCC 24843) (Fission yeast).